The following is a 568-amino-acid chain: T-complex protein 1 subunit theta (568 aa).

A Glycyl lysine isopeptide (Lys-Gly) (interchain with G-Cter in ubiquitin) cross-link involves residue Lys-15. Ser-505 is subject to Phosphoserine.

It belongs to the TCP-1 chaperonin family. In terms of assembly, heterooligomeric complex of about 850 to 900 kDa that forms two stacked rings, 12 to 16 nm in diameter.

Its subcellular location is the cytoplasm. Its function is as follows. Molecular chaperone; assists the folding of proteins upon ATP hydrolysis. Known to play a role, in vitro, in the folding of actin and tubulin. In yeast may play a role in mitotic spindle formation. This Saccharomyces cerevisiae (strain ATCC 204508 / S288c) (Baker's yeast) protein is T-complex protein 1 subunit theta (CCT8).